A 258-amino-acid chain; its full sequence is MRLTPLPAFDNNYIWTLIAPDGRAIIVDPGQALPILEAHSKGLIPTAILLTHHHADHIGGVPELLERWPTLPIYAPHDTRIALNYHRIGEGDSLNILGLRFQVIHTPGHTHSHLTFIGNDLLFCGDTLFSLGCGQIFEGTPTQMLASLQRLAALPIQTRVCCGHEYTLSNAAFALHVDPTNTALQKRRQQANAMRLANLPTLPISLESELNTNPFLRTAAPTIHAATATHLQRTPIDEVEVFATLRHWKNNFPIKNIP.

The Zn(2+) site is built by histidine 52, histidine 54, aspartate 56, histidine 57, histidine 109, aspartate 126, and histidine 164.

The protein belongs to the metallo-beta-lactamase superfamily. Glyoxalase II family. Monomer. The cofactor is Zn(2+).

The enzyme catalyses an S-(2-hydroxyacyl)glutathione + H2O = a 2-hydroxy carboxylate + glutathione + H(+). The protein operates within secondary metabolite metabolism; methylglyoxal degradation; (R)-lactate from methylglyoxal: step 2/2. Functionally, thiolesterase that catalyzes the hydrolysis of S-D-lactoyl-glutathione to form glutathione and D-lactic acid. The sequence is that of Hydroxyacylglutathione hydrolase from Xylella fastidiosa (strain 9a5c).